The primary structure comprises 217 residues: 3-demethoxyubiquinol 3-hydroxylase (217 aa).

Fe cation-binding residues include Glu-66, Glu-96, His-99, Glu-148, Glu-180, and His-183.

It belongs to the COQ7 family. It depends on Fe cation as a cofactor.

The protein localises to the cell membrane. The enzyme catalyses a 5-methoxy-2-methyl-3-(all-trans-polyprenyl)benzene-1,4-diol + AH2 + O2 = a 3-demethylubiquinol + A + H2O. The protein operates within cofactor biosynthesis; ubiquinone biosynthesis. Catalyzes the hydroxylation of 2-nonaprenyl-3-methyl-6-methoxy-1,4-benzoquinol during ubiquinone biosynthesis. In Xylella fastidiosa (strain 9a5c), this protein is 3-demethoxyubiquinol 3-hydroxylase.